The primary structure comprises 183 residues: Inosine triphosphate pyrophosphatase (183 aa).

8–13 (TGNKNK) contributes to the ITP binding site. E36 contributes to the Mg(2+) binding site. Residues K48, 64–65 (DT), K81, 140–143 (FGWD), K161, and 166–167 (HR) contribute to the ITP site.

This sequence belongs to the HAM1 NTPase family. In terms of assembly, homodimer. Mg(2+) is required as a cofactor. Mn(2+) serves as cofactor.

It localises to the cytoplasm. It is found in the nucleus. It carries out the reaction ITP + H2O = IMP + diphosphate + H(+). The enzyme catalyses dITP + H2O = dIMP + diphosphate + H(+). It catalyses the reaction XTP + H2O = XMP + diphosphate + H(+). Pyrophosphatase that hydrolyzes non-canonical purine nucleotides such as inosine triphosphate (ITP), deoxyinosine triphosphate (dITP) or xanthosine 5'-triphosphate (XTP) to their respective monophosphate derivatives. The enzyme does not distinguish between the deoxy- and ribose forms. Probably excludes non-canonical purines from RNA and DNA precursor pools, thus preventing their incorporation into RNA and DNA and avoiding chromosomal lesions. This is Inosine triphosphate pyrophosphatase from Emericella nidulans (strain FGSC A4 / ATCC 38163 / CBS 112.46 / NRRL 194 / M139) (Aspergillus nidulans).